Consider the following 411-residue polypeptide: Branched-chain-amino-acid aminotransferase, cytosolic (411 aa).

The residue at position 247 (K247) is an N6-(pyridoxal phosphate)lysine.

It belongs to the class-IV pyridoxal-phosphate-dependent aminotransferase family. As to quaternary structure, homodimer. The cofactor is pyridoxal 5'-phosphate. The N-terminus is blocked. In terms of tissue distribution, brain, low expression in ovary and placenta, but not found in liver, kidney, and skeletal muscle.

It is found in the cytoplasm. It carries out the reaction L-leucine + 2-oxoglutarate = 4-methyl-2-oxopentanoate + L-glutamate. The catalysed reaction is L-isoleucine + 2-oxoglutarate = (S)-3-methyl-2-oxopentanoate + L-glutamate. The enzyme catalyses L-valine + 2-oxoglutarate = 3-methyl-2-oxobutanoate + L-glutamate. Catalyzes the first reaction in the catabolism of the essential branched chain amino acids leucine, isoleucine, and valine. The sequence is that of Branched-chain-amino-acid aminotransferase, cytosolic (Bcat1) from Rattus norvegicus (Rat).